The primary structure comprises 395 residues: Argininosuccinate synthase (395 aa).

An ATP-binding site is contributed by 7–15; it reads LYSGGLDTS. Residue tyrosine 83 participates in L-citrulline binding. An ATP-binding site is contributed by glycine 113. Residues threonine 115, asparagine 119, and aspartate 120 each contribute to the L-aspartate site. Residue asparagine 119 participates in L-citrulline binding. Positions 123, 169, 178, 253, and 265 each coordinate L-citrulline.

Belongs to the argininosuccinate synthase family. Type 1 subfamily. Homotetramer.

It is found in the cytoplasm. The catalysed reaction is L-citrulline + L-aspartate + ATP = 2-(N(omega)-L-arginino)succinate + AMP + diphosphate + H(+). It functions in the pathway amino-acid biosynthesis; L-arginine biosynthesis; L-arginine from L-ornithine and carbamoyl phosphate: step 2/3. The protein is Argininosuccinate synthase of Picrophilus torridus (strain ATCC 700027 / DSM 9790 / JCM 10055 / NBRC 100828 / KAW 2/3).